The primary structure comprises 301 residues: Pseudouridine-5'-phosphate glycosidase (301 aa).

The Proton donor role is filled by glutamate 25. 2 residues coordinate substrate: lysine 86 and valine 106. Aspartate 138 is a Mn(2+) binding site. 140 to 142 (SAD) contributes to the substrate binding site. Lysine 159 acts as the Nucleophile in catalysis.

It belongs to the pseudouridine-5'-phosphate glycosidase family. As to quaternary structure, homotrimer. Mn(2+) serves as cofactor.

It carries out the reaction D-ribose 5-phosphate + uracil = psi-UMP + H2O. Functionally, catalyzes the reversible cleavage of pseudouridine 5'-phosphate (PsiMP) to ribose 5-phosphate and uracil. Functions biologically in the cleavage direction, as part of a pseudouridine degradation pathway. This Geobacillus kaustophilus (strain HTA426) protein is Pseudouridine-5'-phosphate glycosidase.